The chain runs to 131 residues: Acyl carrier protein 3, mitochondrial (131 aa).

The N-terminal 39 residues, 1 to 39 (MHCIRSSILQHLRLRVSVRPTSLLQNENGFKSIGIFNFT), are a transit peptide targeting the mitochondrion. The 76-residue stretch at 49 to 124 (DQILSRVIEL…DVATYILSET (76 aa)) folds into the Carrier domain. Ser-84 is modified (O-(pantetheine 4'-phosphoryl)serine).

Belongs to the acyl carrier protein (ACP) family. As to quaternary structure, complex I is composed of at least 49 different subunits. 4'-phosphopantetheine is transferred from CoA to a specific serine of the apo-ACP-like protein.

It localises to the mitochondrion. The protein operates within lipid metabolism; fatty acid biosynthesis. Functionally, carrier of the growing fatty acid chain in fatty acid biosynthesis. May be involved in the synthesis of short and medium chain fatty acids. Accessory and non-catalytic subunit of the mitochondrial membrane respiratory chain NADH dehydrogenase (Complex I), which functions in the transfer of electrons from NADH to the respiratory chain. This chain is Acyl carrier protein 3, mitochondrial (MTACP2), found in Arabidopsis thaliana (Mouse-ear cress).